A 471-amino-acid polypeptide reads, in one-letter code: UDP-N-acetylmuramate--L-alanine ligase (471 aa).

114-120 (GTHGKTT) provides a ligand contact to ATP.

Belongs to the MurCDEF family.

Its subcellular location is the cytoplasm. It carries out the reaction UDP-N-acetyl-alpha-D-muramate + L-alanine + ATP = UDP-N-acetyl-alpha-D-muramoyl-L-alanine + ADP + phosphate + H(+). It functions in the pathway cell wall biogenesis; peptidoglycan biosynthesis. Functionally, cell wall formation. The chain is UDP-N-acetylmuramate--L-alanine ligase from Methylobacterium sp. (strain 4-46).